Consider the following 287-residue polypeptide: Large ribosomal subunit protein uL2 (287 aa).

Composition is skewed to basic residues over residues 209–220 (GRNRWKARRPKV) and 258–287 (KTRK…GRQS). The segment at 209 to 287 (GRNRWKARRP…SKRSRGGRQS (79 aa)) is disordered.

It belongs to the universal ribosomal protein uL2 family. In terms of assembly, part of the 50S ribosomal subunit. Forms a bridge to the 30S subunit in the 70S ribosome.

Its function is as follows. One of the primary rRNA binding proteins. Required for association of the 30S and 50S subunits to form the 70S ribosome, for tRNA binding and peptide bond formation. It has been suggested to have peptidyltransferase activity; this is somewhat controversial. Makes several contacts with the 16S rRNA in the 70S ribosome. This Acaryochloris marina (strain MBIC 11017) protein is Large ribosomal subunit protein uL2.